The sequence spans 244 residues: Krueppel-like factor 9 (244 aa).

2 disordered regions span residues 24–51 (VPEH…GDPG) and 80–142 (SVCS…SEKR). The span at 32–51 (DAERLRLPEREVTKEHGDPG) shows a compositional bias: basic and acidic residues. A Phosphoserine modification is found at serine 122. 3 C2H2-type zinc fingers span residues 143 to 167 (HKCP…YRVH), 173 to 197 (FPCT…YRTH), and 203 to 225 (FRCP…ARRH).

It belongs to the Sp1 C2H2-type zinc-finger protein family. As to quaternary structure, interacts with ZZEF1.

The protein localises to the nucleus. In terms of biological role, transcription factor that binds to GC box promoter elements. Selectively activates mRNA synthesis from genes containing tandem repeats of GC boxes but represses genes with a single GC box. Acts as an epidermal circadian transcription factor regulating keratinocyte proliferation. The chain is Krueppel-like factor 9 (KLF9) from Sus scrofa (Pig).